A 341-amino-acid chain; its full sequence is HTH-type transcriptional repressor PurR (341 aa).

The region spanning 2-56 (ATIKDVAKRANVSTTTVSHVINKTRFVSEETRNAVWAAIKELHYSPSAVARSLKV) is the HTH lacI-type domain. A DNA-binding region (H-T-H motif) is located at residues 4–23 (IKDVAKRANVSTTTVSHVIN). Residues 48–56 (SAVARSLKV) mediate DNA binding. Hypoxanthine contacts are provided by tyrosine 73, arginine 190, threonine 192, phenylalanine 221, and aspartate 275.

In terms of assembly, homodimer.

Its pathway is purine metabolism; purine nucleotide biosynthesis [regulation]. Functionally, is the main repressor of the genes involved in the de novo synthesis of purine nucleotides, regulating purB, purC, purEK, purF, purHD, purL, purMN and guaBA expression. PurR is allosterically activated to bind its cognate DNA by binding the purine corepressors, hypoxanthine or guanine, thereby effecting transcription repression. This is HTH-type transcriptional repressor PurR from Escherichia coli O139:H28 (strain E24377A / ETEC).